A 200-amino-acid polypeptide reads, in one-letter code: Phospholipase A2 inhibitor gamma subunit B (200 aa).

A signal peptide spans 1–19 (MKFLLFCCLFGTFLATGMC). 8 disulfides stabilise this stretch: Cys22–Cys46, Cys25–Cys32, Cys39–Cys67, Cys73–Cys94, Cys95–Cys100, Cys120–Cys145, Cys138–Cys165, and Cys171–Cys191. Asn31 carries an N-linked (GlcNAc...) asparagine glycan.

The protein belongs to the CNF-like-inhibitor family. Heterodimer of subunit A and subunit B. N-glycosylated. As to expression, expressed by the liver. Not expressed in esophagus, stomach, pancreas, spleen, gall bladder, small intestine, rectum, kidney, trachea, lung, testis and body fat.

Its subcellular location is the secreted. Inhibits the enzymatic activity of phospholipase A2 (PA2). The protein is Phospholipase A2 inhibitor gamma subunit B of Elaphe quadrivirgata (Japanese four-lined ratsnake).